A 250-amino-acid polypeptide reads, in one-letter code: Probable transcriptional regulatory protein Cag_0165 (250 aa).

The protein belongs to the TACO1 family.

The protein resides in the cytoplasm. This chain is Probable transcriptional regulatory protein Cag_0165, found in Chlorobium chlorochromatii (strain CaD3).